We begin with the raw amino-acid sequence, 290 residues long: Ribonuclease HIII (290 aa).

Residues 78-290 (LPLIGTDEVG…FKNTEKAKNA (213 aa)) form the RNase H type-2 domain. Positions 84, 85, and 187 each coordinate a divalent metal cation.

It belongs to the RNase HII family. RnhC subfamily. Mn(2+) is required as a cofactor. Mg(2+) serves as cofactor.

It is found in the cytoplasm. It carries out the reaction Endonucleolytic cleavage to 5'-phosphomonoester.. Functionally, endonuclease that specifically degrades the RNA of RNA-DNA hybrids. The polypeptide is Ribonuclease HIII (Streptococcus pneumoniae (strain CGSP14)).